The primary structure comprises 537 residues: CWF19-like protein 1 (537 aa).

The tract at residues 297–323 (KQGRKRPSTGRDTRPPHAKQPRKPPQP) is disordered.

It belongs to the CWF19 family.

The protein is CWF19-like protein 1 (Cwf19l1) of Mus musculus (Mouse).